A 110-amino-acid chain; its full sequence is Heat shock protein Hsp-12.2 (110 aa).

In terms of domain architecture, sHSP spans 15–110 (DWPLQHNDGV…VLTITASKKA (96 aa)).

The protein belongs to the small heat shock protein (HSP20) family.

In Caenorhabditis elegans, this protein is Heat shock protein Hsp-12.2 (hsp-12.2).